The chain runs to 379 residues: tRNA-specific 2-thiouridylase MnmA (379 aa).

Residues 9 to 16 (GLSGGVDS) and methionine 35 contribute to the ATP site. Positions 95 to 97 (NPD) are interaction with target base in tRNA. Cysteine 100 functions as the Nucleophile in the catalytic mechanism. Cysteine 100 and cysteine 198 are joined by a disulfide. An ATP-binding site is contributed by glycine 124. The interval 148 to 150 (KDQ) is interaction with tRNA. The active-site Cysteine persulfide intermediate is cysteine 198. Positions 325 to 326 (RY) are interaction with tRNA.

Belongs to the MnmA/TRMU family.

It is found in the cytoplasm. The enzyme catalyses S-sulfanyl-L-cysteinyl-[protein] + uridine(34) in tRNA + AH2 + ATP = 2-thiouridine(34) in tRNA + L-cysteinyl-[protein] + A + AMP + diphosphate + H(+). Its function is as follows. Catalyzes the 2-thiolation of uridine at the wobble position (U34) of tRNA, leading to the formation of s(2)U34. This Acidovorax sp. (strain JS42) protein is tRNA-specific 2-thiouridylase MnmA.